We begin with the raw amino-acid sequence, 1368 residues long: MQYSFTEKKRIRKSFAKRPIVHQVPFLLATQLESFSTFLQADVPATQRKPEGLQAAFTSVFPIVSHNGFARLEFVSYALSSPAFNIKECQQRGLTYCSALRAKVRLVILDKESPNKPVVKEVKEQEVYMGEIPLMTPTGSFVINGTERVIVSQLHRSPGVFFEHDKGKTHSSGKLLFSARIIPYRGSWLDFEFDPKDILYFRVDRRRKMPVTILLKAIGLTPEQILANFFVFDNFTLMDEGAQLEFVPERLRGEVARFDITDRDGKVIVQKDKRINAKHIRDLEAAKTKFISVPEDYLLGRVLAKNVVDGDTGEVIASANDEVTESVLEKLREAGIKDIQTLYTNDLDQGPYISSTLRVDETTDKTAARIAIYRMMRPGEPPTEEAVEALFNRLFYSEEAYDLSKVGRMKFNRRVGRDEIVGPMTLQDDDILATIKILVELRNGKGEVDDIDHLGNRRVRCVGELAENQFRAGLVRVERAVKERLGQAESENLMPHDLINSKPISSAIREFFGSSQLSQFMDQTNPLSEITHKRRVSALGPGGLTRERAGFEVRDVHPTHYGRVCPIETPEGPNIGLINSLALYAHLNEYGFLETPYRKVVDSKVTDQIDYLSAIEEGRYMIAQANAAIDENGQLIDELVSSREAGETMMVTPDRIQYMDVAPSQIVSVAASLIPFLEHDDANRALMGSNMQRQAVPCLRPEKPVVGTGIERTCAVDSGTTVQAFRGGVVDYVDAGRIVIRVNDDEAVAGEVGVDIYNLIKYTRSNQNTNINQRPIVKMGDKVSRGDVLADGASTDLGELALGQNMLIAFMPWNGYNFEDSILISEKVVADDRYTSIHIEELNVVARDTKLGPEEITRDISNLAEVQLGRLDESGIVYIGAEVEAGDVLVGKVTPKGETQLTPEEKLLRAIFGEKASDVKDTSLRVPSGMSGTVIDVQVFTREGIQRDKRAQQIIDDELKRYRLDLNDQLRIVEGDAFQRLARMLVGKVANGGPKKLAKGTKIDQAYLEDLDHYHWFDIRLADDEAAAQLEAIKNSIEEKRHQFDLAFEEKRKKLTQGDELPPGVLKMVKVYLAVKRRLQPGDKMAGRHGNKGVVSKIVPIEDMPYMADGRPADVVLNPLGVPSRMNVGQVLEVHLGWAAKGLGWRIGEMLQRQAKIEELRTFLTKIYNESGRQEDLESFTDDEILELAKNLREGVPFATPVFDGATEEEMGKMLDLAFPDDIAEQLGMNPSKNQVRLYDGRTGEMFERRVTLGYMHYLKLHHLVDDKMHARSTGPYSLVTQQPLGGKAQFGGQRFGEMEVWALEAYGASYVLQEMLTVKSDDVTGRTKVYENLVKGDHVIDAGMPESFNVLVKEIRSLGIDIDLDRN.

It belongs to the RNA polymerase beta chain family. The RNAP catalytic core consists of 2 alpha, 1 beta, 1 beta' and 1 omega subunit. When a sigma factor is associated with the core the holoenzyme is formed, which can initiate transcription.

The catalysed reaction is RNA(n) + a ribonucleoside 5'-triphosphate = RNA(n+1) + diphosphate. Functionally, DNA-dependent RNA polymerase catalyzes the transcription of DNA into RNA using the four ribonucleoside triphosphates as substrates. The polypeptide is DNA-directed RNA polymerase subunit beta (Burkholderia cenocepacia (strain HI2424)).